The chain runs to 344 residues: Protein pelota homolog (344 aa).

This sequence belongs to the eukaryotic release factor 1 family. Pelota subfamily. Monomer. A divalent metal cation serves as cofactor.

The protein localises to the cytoplasm. Its function is as follows. May function in recognizing stalled ribosomes, interact with stem-loop structures in stalled mRNA molecules, and effect endonucleolytic cleavage of the mRNA. May play a role in the release non-functional ribosomes and degradation of damaged mRNAs. Has endoribonuclease activity. This is Protein pelota homolog from Archaeoglobus fulgidus (strain ATCC 49558 / DSM 4304 / JCM 9628 / NBRC 100126 / VC-16).